We begin with the raw amino-acid sequence, 632 residues long: tRNA uridine 5-carboxymethylaminomethyl modification enzyme MnmG (632 aa).

Residues 13–18, Val-125, and Ser-180 each bind FAD; that span reads GGGHAG. Position 273-287 (273-287) interacts with NAD(+); that stretch reads GPRYCPSIEDKVMRF. Position 370 (Gln-370) interacts with FAD.

It belongs to the MnmG family. As to quaternary structure, homodimer. Heterotetramer of two MnmE and two MnmG subunits. Requires FAD as cofactor.

The protein resides in the cytoplasm. Its function is as follows. NAD-binding protein involved in the addition of a carboxymethylaminomethyl (cmnm) group at the wobble position (U34) of certain tRNAs, forming tRNA-cmnm(5)s(2)U34. In Proteus mirabilis (strain HI4320), this protein is tRNA uridine 5-carboxymethylaminomethyl modification enzyme MnmG.